A 538-amino-acid polypeptide reads, in one-letter code: Bifunctional purine biosynthesis protein PurH (538 aa).

The region spanning 8–158 is the MGS-like domain; the sequence is IPAPDKVKIR…KNHAYVTVVT (151 aa).

The protein belongs to the PurH family.

It carries out the reaction (6R)-10-formyltetrahydrofolate + 5-amino-1-(5-phospho-beta-D-ribosyl)imidazole-4-carboxamide = 5-formamido-1-(5-phospho-D-ribosyl)imidazole-4-carboxamide + (6S)-5,6,7,8-tetrahydrofolate. It catalyses the reaction IMP + H2O = 5-formamido-1-(5-phospho-D-ribosyl)imidazole-4-carboxamide. Its pathway is purine metabolism; IMP biosynthesis via de novo pathway; 5-formamido-1-(5-phospho-D-ribosyl)imidazole-4-carboxamide from 5-amino-1-(5-phospho-D-ribosyl)imidazole-4-carboxamide (10-formyl THF route): step 1/1. It participates in purine metabolism; IMP biosynthesis via de novo pathway; IMP from 5-formamido-1-(5-phospho-D-ribosyl)imidazole-4-carboxamide: step 1/1. The polypeptide is Bifunctional purine biosynthesis protein PurH (Agrobacterium fabrum (strain C58 / ATCC 33970) (Agrobacterium tumefaciens (strain C58))).